A 448-amino-acid chain; its full sequence is Tryptophan dimethylallyltransferase 1 (448 aa).

Residues 80-81 (IL) and glutamate 89 contribute to the L-tryptophan site. Substrate is bound by residues arginine 100, lysine 186, and tyrosine 188. L-tryptophan contacts are provided by tyrosine 190 and arginine 249. Substrate-binding residues include arginine 262, lysine 264, tyrosine 266, glutamine 348, tyrosine 350, tyrosine 414, and tyrosine 418.

Belongs to the tryptophan dimethylallyltransferase family. In terms of assembly, homodimer.

It catalyses the reaction L-tryptophan + dimethylallyl diphosphate = 4-(3-methylbut-2-enyl)-L-tryptophan + diphosphate. The protein operates within alkaloid biosynthesis; ergot alkaloid biosynthesis. Its function is as follows. Tryptophan dimethylallyltransferase; part of the gene cluster that mediates the biosynthesis of fungal ergot alkaloid. DmaW catalyzes the first step of ergot alkaloid biosynthesis by condensing dimethylallyl diphosphate (DMAP) and tryptophan to form 4-dimethylallyl-L-tryptophan. The second step is catalyzed by the methyltransferase easF that methylates 4-dimethylallyl-L-tryptophan in the presence of S-adenosyl-L-methionine, resulting in the formation of 4-dimethylallyl-L-abrine. The catalase easC and the FAD-dependent oxidoreductase easE then transform 4-dimethylallyl-L-abrine to chanoclavine-I which is further oxidized by easD in the presence of NAD(+), resulting in the formation of chanoclavine-I aldehyde. Agroclavine dehydrogenase easG then mediates the conversion of chanoclavine-I aldehyde to agroclavine via a non-enzymatic adduct reaction: the substrate is an iminium intermediate that is formed spontaneously from chanoclavine-I aldehyde in the presence of glutathione. The presence of easA is not required to complete this reaction. Further conversion of agroclavine to paspalic acid is a two-step process involving oxidation of agroclavine to elymoclavine and of elymoclavine to paspalic acid, the second step being performed by the elymoclavine oxidase cloA. Paspalic acid is then further converted to D-lysergic acid. Ergopeptines are assembled from D-lysergic acid and three different amino acids by the D-lysergyl-peptide-synthetases composed each of a monomudular and a trimodular nonribosomal peptide synthetase subunit. LpsB and lpsC encode the monomodular subunits responsible for D-lysergic acid activation and incorporation into the ergopeptine backbone. LpsA1 and A2 subunits encode the trimodular nonribosomal peptide synthetase assembling the tripeptide portion of ergopeptines. LpsA1 is responsible for formation of the major ergopeptine, ergotamine, and lpsA2 for alpha-ergocryptine, the minor ergopeptine of the total alkaloid mixture elaborated by C.purpurea. D-lysergyl-tripeptides are assembled by the nonribosomal peptide synthetases and released as N-(D-lysergyl-aminoacyl)-lactams. Cyclolization of the D-lysergyl-tripeptides is performed by the Fe(2+)/2-ketoglutarate-dependent dioxygenase easH which introduces a hydroxyl group into N-(D-lysergyl-aminoacyl)-lactam at alpha-C of the aminoacyl residue followed by spontaneous condensation with the terminal lactam carbonyl group. This is Tryptophan dimethylallyltransferase 1 from Claviceps purpurea (Ergot fungus).